Here is a 672-residue protein sequence, read N- to C-terminus: Poly-beta-1,6-N-acetyl-D-glucosamine N-deacetylase (672 aa).

The N-terminal stretch at 1–20 (MLRNGNKYLLMLVSIIMLTA) is a signal peptide. The N-palmitoyl cysteine moiety is linked to residue Cys21. Cys21 carries the S-diacylglycerol cysteine lipid modification. The NodB homology domain occupies 107 to 349 (KAVVLTFDDG…IQRVKDMQIS (243 aa)).

Belongs to the polysaccharide deacetylase family.

It localises to the cell outer membrane. Its function is as follows. Catalyzes the N-deacetylation of poly-beta-1,6-N-acetyl-D-glucosamine (PGA), a biofilm adhesin polysaccharide. N-deacetylation promotes PGA export through the PgaA porin. This is Poly-beta-1,6-N-acetyl-D-glucosamine N-deacetylase (pgaB) from Escherichia coli (strain K12).